Here is an 82-residue protein sequence, read N- to C-terminus: Progonadoliberin-3 (82 aa).

A signal peptide spans 1–23; the sequence is MDLSNRTVVQVVVLALVAQVTLS. Q24 is modified (pyrrolidone carboxylic acid). G33 is modified (glycine amide).

It belongs to the GnRH family. In terms of tissue distribution, brain.

The protein resides in the secreted. Its function is as follows. Stimulates the secretion of gonadotropins. This is Progonadoliberin-3 (gnrh3) from Oncorhynchus nerka (Sockeye salmon).